The chain runs to 398 residues: 1-deoxy-D-xylulose 5-phosphate reductoisomerase (398 aa).

The NADPH site is built by threonine 13, glycine 14, serine 15, isoleucine 16, arginine 40, and asparagine 127. Lysine 128 provides a ligand contact to 1-deoxy-D-xylulose 5-phosphate. An NADPH-binding site is contributed by glutamate 129. Mn(2+) is bound at residue aspartate 153. Positions 154, 155, 188, and 211 each coordinate 1-deoxy-D-xylulose 5-phosphate. Residue glutamate 155 participates in Mn(2+) binding. Glycine 217 is an NADPH binding site. 1-deoxy-D-xylulose 5-phosphate is bound by residues serine 224, asparagine 229, lysine 230, and glutamate 233. Glutamate 233 lines the Mn(2+) pocket.

It belongs to the DXR family. Requires Mg(2+) as cofactor. It depends on Mn(2+) as a cofactor.

The enzyme catalyses 2-C-methyl-D-erythritol 4-phosphate + NADP(+) = 1-deoxy-D-xylulose 5-phosphate + NADPH + H(+). It participates in isoprenoid biosynthesis; isopentenyl diphosphate biosynthesis via DXP pathway; isopentenyl diphosphate from 1-deoxy-D-xylulose 5-phosphate: step 1/6. In terms of biological role, catalyzes the NADPH-dependent rearrangement and reduction of 1-deoxy-D-xylulose-5-phosphate (DXP) to 2-C-methyl-D-erythritol 4-phosphate (MEP). The protein is 1-deoxy-D-xylulose 5-phosphate reductoisomerase of Cellvibrio japonicus (strain Ueda107) (Pseudomonas fluorescens subsp. cellulosa).